The following is a 243-amino-acid chain: MAQNDTVKLIGCSDDPFSIRPRVALHLKSIKYEYLEEPDDDLGEKSQLLLKSNPIHKKTPVLIHGDLAICESLNIVQYLDEAWPSDPSILPSNAYDRASARFWAQYIDDKCFEAANALTGANNDEERIAATGKLTECLAILEETFQKSSKGLGFFGGETIGYLDIACAALLGPISVIEMFSADKFVREETTPGLIQWAVRFRAHEAVRPYMPTVEEVTELVKQRIEEGFKRNFKSNVSTSEYE.

In terms of domain architecture, GST N-terminal spans 5-87 (DTVKLIGCSD…YLDEAWPSDP (83 aa)). Glutathione contacts are provided by residues 15 to 16 (DP), 44 to 45 (EK), 58 to 59 (KT), and 71 to 72 (ES). Positions 93 to 220 (NAYDRASARF…MPTVEEVTEL (128 aa)) constitute a GST C-terminal domain. The residue at position 159 (Thr-159) is a Phosphothreonine.

It belongs to the GST superfamily. Tau family.

The protein localises to the cytoplasm. It localises to the cytosol. The catalysed reaction is RX + glutathione = an S-substituted glutathione + a halide anion + H(+). May be involved in the conjugation of reduced glutathione to a wide number of exogenous and endogenous hydrophobic electrophiles and have a detoxification role against certain herbicides. The chain is Glutathione S-transferase U14 (GSTU14) from Arabidopsis thaliana (Mouse-ear cress).